Here is a 1065-residue protein sequence, read N- to C-terminus: NLR family CARD domain-containing protein 3 (1065 aa).

Over residues 1–10 the composition is skewed to basic and acidic residues; that stretch reads MRKQEVRTGR. The disordered stretch occupies residues 1–62; sequence MRKQEVRTGR…PLGPCSNDSR (62 aa). The NACHT domain maps to 139–460; that stretch reads RVSITIGVAG…YCFTHLSLQE (322 aa). 145-152 lines the ATP pocket; sequence GVAGMGKT. A TRAF6-binding motif is present at residues 457–460; that stretch reads SLQE. 16 LRR repeats span residues 617–639, 641–663, 665–688, 693–716, 721–744, 749–772, 777–800, 805–828, 833–856, 861–884, 889–912, 917–940, 945–968, 973–996, 1001–1029, and 1031–1052; these read EANL…LLYC, KLRL…VLSG, DCRI…ALAR, NRSL…ALAD, NRTL…SMAE, NRTL…RMAD, NRSL…ALAE, NQGL…ALMG, NQTL…AIAH, NSTL…AIAV, NRTL…ALGQ, NRSL…AVAR, NTAL…VLGE, NRTL…ALAN, NSSL…LSGN, and RLQH…MISE.

The protein belongs to the NLRP family. Directly interacts (via CARD) with TMEM173/STING; this interaction reduces TMEM173 trafficking to the perinuclear region in response to interferon stimulatory DNA. Also interacts, but to a lesser extent, with TBK1. Interacts with TRAF6; this interaction results in decreased TRAF6 'Lys-63'-linked polyubiquitination, but leaves 'Lys-48'-linked chains unchanged, promoting TRAF6 protein degradation. Interacts with PIK3R1/PIK3R2; this interaction disrupts the association between PIK3R1/PIK3R2 and the p110 catalytic subunit PIK3CA/PIK3CB/PIK3CD and reduces PIK3R1/PIK3R2 activation. Weakly interacts with PYCARD/ASC. Interacts with CASP1 and CASP5.

The protein resides in the cytoplasm. Functionally, negative regulator of the innate immune response. Attenuates signaling pathways activated by Toll-like receptors (TLRs) and the DNA sensor STING/TMEM173 in response to pathogen-associated molecular patterns, such as intracellular poly(dA:dT), but not poly(I:C), or in response to DNA virus infection, including that of Herpes simplex virus 1 (HSV1). May affect TLR4 signaling by acting at the level of TRAF6 ubiquitination, decreasing the activating 'Lys-63'-linked ubiquitination and leaving unchanged the degradative 'Lys-48'-linked ubiquitination. Inhibits the PI3K-AKT-mTOR pathway possibly by directly interacting with the posphatidylinositol 3-kinase regulatory subunit p85 (PIK3R1/PIK3R2) and disrupting the association between PIK3R1/PIK3R2 and the catalytic subunit p110 (PIK3CA/PIK3CB/PIK3CD) and reducing PIK3R1/PIK3R2 activation. Via its regulation of the PI3K-AKT-mTOR pathway, controls cell proliferation, predominantly in intestinal epithelial cells. May also affect NOD1- or NOD2-mediated NF-kappa-B activation. Might also affect the inflammatory response by preventing NLRP3 inflammasome formation, CASP1 cleavage and IL1B maturation. This is NLR family CARD domain-containing protein 3 (NLRC3) from Homo sapiens (Human).